The primary structure comprises 260 residues: uncharacterized protein (260 aa).

An ABC transporter domain is found at 4-231; it reads LHVDHVTHTY…PKELAAMLPF (228 aa). Residue 40 to 47 coordinates ATP; it reads GPSGCGKT.

Belongs to the ABC transporter superfamily.

This is an uncharacterized protein from Bacillus subtilis (strain 168).